A 1136-amino-acid chain; its full sequence is Probable RNA-dependent RNA polymerase 2 (1136 aa).

The segment at S965–P989 is disordered. Positions D967–P980 are enriched in low complexity.

The protein belongs to the RdRP family.

It carries out the reaction RNA(n) + a ribonucleoside 5'-triphosphate = RNA(n+1) + diphosphate. In terms of biological role, probably involved in the RNA silencing pathway and required for the generation of small interfering RNAs (siRNAs). This chain is Probable RNA-dependent RNA polymerase 2 (RDR2), found in Oryza sativa subsp. japonica (Rice).